The following is a 141-amino-acid chain: Hemoglobin subunit alpha-1 (141 aa).

Positions 1–141 (VLSEGNKKAI…VTYQLSSLYR (141 aa)) constitute a Globin domain. H59 contacts O2. H88 is a heme b binding site.

The protein belongs to the globin family. Heterotetramer of two alpha chains and two beta chains. In terms of tissue distribution, red blood cells.

Its function is as follows. Involved in oxygen transport from the lung to the various peripheral tissues. This chain is Hemoglobin subunit alpha-1, found in Torpedo marmorata (Marbled electric ray).